The following is a 691-amino-acid chain: DNA ligase (691 aa).

NAD(+)-binding positions include Asp41–Asp45, Ser90–Leu91, and Glu130. Catalysis depends on Lys132, which acts as the N6-AMP-lysine intermediate. Arg153, Glu190, Lys307, and Lys331 together coordinate NAD(+). Zn(2+) is bound by residues Cys425, Cys428, Cys443, and Cys449. The BRCT domain maps to Ala610–Pro691.

Belongs to the NAD-dependent DNA ligase family. LigA subfamily. The cofactor is Mg(2+). Requires Mn(2+) as cofactor.

The catalysed reaction is NAD(+) + (deoxyribonucleotide)n-3'-hydroxyl + 5'-phospho-(deoxyribonucleotide)m = (deoxyribonucleotide)n+m + AMP + beta-nicotinamide D-nucleotide.. Functionally, DNA ligase that catalyzes the formation of phosphodiester linkages between 5'-phosphoryl and 3'-hydroxyl groups in double-stranded DNA using NAD as a coenzyme and as the energy source for the reaction. It is essential for DNA replication and repair of damaged DNA. The sequence is that of DNA ligase from Burkholderia ambifaria (strain MC40-6).